Reading from the N-terminus, the 154-residue chain is NADPH-dependent 7-cyano-7-deazaguanine reductase (154 aa).

The active-site Thioimide intermediate is the Cys52. Catalysis depends on Asp59, which acts as the Proton donor. Substrate contacts are provided by residues Val74 to Ser76 and His93 to Glu94.

This sequence belongs to the GTP cyclohydrolase I family. QueF type 1 subfamily.

Its subcellular location is the cytoplasm. The catalysed reaction is 7-aminomethyl-7-carbaguanine + 2 NADP(+) = 7-cyano-7-deazaguanine + 2 NADPH + 3 H(+). It participates in tRNA modification; tRNA-queuosine biosynthesis. Catalyzes the NADPH-dependent reduction of 7-cyano-7-deazaguanine (preQ0) to 7-aminomethyl-7-deazaguanine (preQ1). The polypeptide is NADPH-dependent 7-cyano-7-deazaguanine reductase (Ruegeria sp. (strain TM1040) (Silicibacter sp.)).